Here is a 457-residue protein sequence, read N- to C-terminus: Nuclear hormone receptor family member nhr-20 (457 aa).

Residues 16-92 constitute a DNA-binding region (nuclear receptor); it reads TSKCLVCEHP…AGMRRECVQK (77 aa). NR C4-type zinc fingers lie at residues 19 to 40 and 56 to 80; these read CLVC…CLAC and CKKD…FDKC. The tract at residues 125-182 is disordered; the sequence is GDQTDDNSPLSIEKKSPPGLLPNDSPMMADFKFDPSDIPSTSGGSTQRLERSPSPKLA. Positions 162–171 are enriched in polar residues; the sequence is IPSTSGGSTQ. An NR LBD domain is found at 201-457; it reads QLKNSMDRRR…DALSKSLLTL (257 aa).

Belongs to the nuclear hormone receptor family.

It localises to the nucleus. Orphan nuclear receptor. The polypeptide is Nuclear hormone receptor family member nhr-20 (nhr-20) (Caenorhabditis elegans).